Consider the following 239-residue polypeptide: Lactate utilization protein A (239 aa).

This sequence belongs to the LutA/YkgE family.

Is involved in L-lactate degradation and allows cells to grow with lactate as the sole carbon source. The chain is Lactate utilization protein A from Bacillus cytotoxicus (strain DSM 22905 / CIP 110041 / 391-98 / NVH 391-98).